The following is a 238-amino-acid chain: Lytic polysaccharide monooxygenase NCU01050 (238 aa).

A signal peptide spans 1–15 (MKVLAPLVLASAASA). Residue histidine 16 coordinates Cu(2+). Residue glutamate 45 coordinates O2. Cystine bridges form between cysteine 54–cysteine 186 and cysteine 156–cysteine 238. N-linked (GlcNAc...) asparagine glycosylation is present at asparagine 75. Residue histidine 99 participates in Cu(2+) binding. Histidine 172 and glutamine 181 together coordinate O2. Catalysis depends on histidine 172, which acts as the Proton donor. Cu(2+) is bound at residue tyrosine 183.

It belongs to the polysaccharide monooxygenase AA9 family. As to quaternary structure, monomer. Cu(2+) is required as a cofactor. N-linked glycans containing mannose and N-acetylglucosamine.

It is found in the secreted. It catalyses the reaction [(1-&gt;4)-beta-D-glucosyl]n+m + reduced acceptor + O2 = 4-dehydro-beta-D-glucosyl-[(1-&gt;4)-beta-D-glucosyl]n-1 + [(1-&gt;4)-beta-D-glucosyl]m + acceptor + H2O.. Its pathway is glycan metabolism; cellulose degradation. Its activity is regulated as follows. Inhibited by increasing levels of ascorbic acid. In terms of biological role, catalyzes the oxidative cleavage of glycosidic bonds in cellulosic substrates via a copper-dependent mechanism. In the presence of an exogenous reductant ascorbic acid, degrades phosphoric acid swollen cellulose (PASC) to cello-oligosaccharides and 4-ketoaldoses, the end products oxidized at the non-reducing end. Somewhat active toward tamarind xyloglucan and konjac glucomannan, with improved activity with glucomannan in the presence of PASC. H(2)O(2) is able to substitute for O(2) in reactions with PASC, xyloglucan and glucomannan. Very weak activity on cellopentaose. No activity with birchwood xylan or ivory nut mannan. Disrupts plant cell wall polysaccharide substrates, such as recalcitrant crystalline cellulose. The chain is Lytic polysaccharide monooxygenase NCU01050 from Neurospora crassa (strain ATCC 24698 / 74-OR23-1A / CBS 708.71 / DSM 1257 / FGSC 987).